The primary structure comprises 338 residues: Glycerol-3-phosphate dehydrogenase [NAD(P)+] (338 aa).

NADPH-binding residues include Ser13, Trp14, and Lys108. Sn-glycerol 3-phosphate-binding residues include Lys108, Gly139, and Ser141. Ala143 is an NADPH binding site. Sn-glycerol 3-phosphate is bound by residues Lys194, Asp247, Ser257, Arg258, and Asn259. Lys194 serves as the catalytic Proton acceptor. Arg258 contributes to the NADPH binding site. Residues Val282 and Glu284 each coordinate NADPH.

Belongs to the NAD-dependent glycerol-3-phosphate dehydrogenase family.

It localises to the cytoplasm. It carries out the reaction sn-glycerol 3-phosphate + NAD(+) = dihydroxyacetone phosphate + NADH + H(+). The enzyme catalyses sn-glycerol 3-phosphate + NADP(+) = dihydroxyacetone phosphate + NADPH + H(+). Its pathway is membrane lipid metabolism; glycerophospholipid metabolism. Functionally, catalyzes the reduction of the glycolytic intermediate dihydroxyacetone phosphate (DHAP) to sn-glycerol 3-phosphate (G3P), the key precursor for phospholipid synthesis. The chain is Glycerol-3-phosphate dehydrogenase [NAD(P)+] from Streptococcus gordonii (strain Challis / ATCC 35105 / BCRC 15272 / CH1 / DL1 / V288).